The primary structure comprises 304 residues: Oxygen-dependent coproporphyrinogen-III oxidase (304 aa).

Substrate is bound at residue S94. H98 and H108 together coordinate a divalent metal cation. Residue H108 is the Proton donor of the active site. 110–112 serves as a coordination point for substrate; that stretch reads NVR. A divalent metal cation contacts are provided by H147 and H177. The segment at 242–277 is important for dimerization; that stretch reads YVEFNLVYDRGTLFGLQTGGRTESILMSMPPLVRWE. 260–262 is a binding site for substrate; sequence GGR.

The protein belongs to the aerobic coproporphyrinogen-III oxidase family. As to quaternary structure, homodimer. The cofactor is a divalent metal cation.

It localises to the cytoplasm. The catalysed reaction is coproporphyrinogen III + O2 + 2 H(+) = protoporphyrinogen IX + 2 CO2 + 2 H2O. It functions in the pathway porphyrin-containing compound metabolism; protoporphyrin-IX biosynthesis; protoporphyrinogen-IX from coproporphyrinogen-III (O2 route): step 1/1. Its function is as follows. Involved in the heme biosynthesis. Catalyzes the aerobic oxidative decarboxylation of propionate groups of rings A and B of coproporphyrinogen-III to yield the vinyl groups in protoporphyrinogen-IX. The polypeptide is Oxygen-dependent coproporphyrinogen-III oxidase (Shewanella halifaxensis (strain HAW-EB4)).